We begin with the raw amino-acid sequence, 169 residues long: Nucleoside diphosphate kinase 3 (169 aa).

Residues K29, R105, T111, R122, V129, and N132 each contribute to the ADP site. Catalysis depends on H135, which acts as the Pros-phosphohistidine intermediate.

The protein belongs to the NDK family. Homohexamer. Interacts (via its N-terminal region) with KAT5; this interaction enables recruitment of NME3 at DNA damage sites where it plays a role in the repair of DNA. Found in association with several ciliary nephronophthisis proteins, including NEK8, CEP164, ANKS6. Mg(2+) serves as cofactor.

The protein resides in the mitochondrion outer membrane. Its subcellular location is the cytoplasm. The protein localises to the cytoskeleton. It is found in the cilium basal body. The catalysed reaction is a 2'-deoxyribonucleoside 5'-diphosphate + ATP = a 2'-deoxyribonucleoside 5'-triphosphate + ADP. The enzyme catalyses a ribonucleoside 5'-diphosphate + ATP = a ribonucleoside 5'-triphosphate + ADP. Catalyzes the phosphorylation of ribonucleosides and deoxyribonucleoside diphosphates, other than ATP, into the corresponding triphosphates with ATP as the major phosphate donor. The ATP gamma phosphate is transferred to the nucleoside diphosphate beta phosphate via a ping-pong mechanism, using a phosphorylated active-site intermediate. Through the catalyzed exchange of gamma-phosphate between di- and triphosphonucleosides participates in regulation of intracellular nucleotide homeostasis. Inhibits granulocyte differentiation. May be required for ciliary function during renal development. In terms of biological role, independently of its kinase activity, facilitates mitochondrial tethering prior to membrane fusion through its direct membrane-binding and hexamerization. Implicated in repair of both single- and double-stranded breaks in DNA through its association with the ribonucleotide reductase complex (RNR complex) via its interaction with the histone acetyltransferase KAT5, this interaction enables recruitment of NME3 at DNA damage sites where it plays a role in the repair of DNA, independently of its kinase activity. The protein is Nucleoside diphosphate kinase 3 of Homo sapiens (Human).